A 141-amino-acid polypeptide reads, in one-letter code: Large ribosomal subunit protein uL11 (141 aa).

Belongs to the universal ribosomal protein uL11 family. In terms of assembly, part of the ribosomal stalk of the 50S ribosomal subunit. Interacts with L10 and the large rRNA to form the base of the stalk. L10 forms an elongated spine to which L12 dimers bind in a sequential fashion forming a multimeric L10(L12)X complex. One or more lysine residues are methylated.

Functionally, forms part of the ribosomal stalk which helps the ribosome interact with GTP-bound translation factors. In Trichodesmium erythraeum (strain IMS101), this protein is Large ribosomal subunit protein uL11.